A 260-amino-acid chain; its full sequence is Zinc import ATP-binding protein ZnuC (260 aa).

The ABC transporter domain maps to 14–229 (LTARNLCADR…PEFARLFGDQ (216 aa)). 46–53 (GPNGAGKS) lines the ATP pocket.

Belongs to the ABC transporter superfamily. Zinc importer (TC 3.A.1.15.5) family. In terms of assembly, the complex is composed of two ATP-binding proteins (ZnuC), two transmembrane proteins (ZnuB) and a solute-binding protein (ZnuA).

Its subcellular location is the cell inner membrane. It carries out the reaction Zn(2+)(out) + ATP(in) + H2O(in) = Zn(2+)(in) + ADP(in) + phosphate(in) + H(+)(in). In terms of biological role, part of the ABC transporter complex ZnuABC involved in zinc import. Responsible for energy coupling to the transport system. The sequence is that of Zinc import ATP-binding protein ZnuC from Magnetococcus marinus (strain ATCC BAA-1437 / JCM 17883 / MC-1).